The following is a 133-amino-acid chain: Small ribosomal subunit protein uS8 (133 aa).

It belongs to the universal ribosomal protein uS8 family. In terms of assembly, part of the 30S ribosomal subunit. Contacts proteins S5 and S12.

Functionally, one of the primary rRNA binding proteins, it binds directly to 16S rRNA central domain where it helps coordinate assembly of the platform of the 30S subunit. The polypeptide is Small ribosomal subunit protein uS8 (Prochlorococcus marinus (strain MIT 9215)).